The sequence spans 179 residues: Large ribosomal subunit protein uL5 (179 aa).

This sequence belongs to the universal ribosomal protein uL5 family. In terms of assembly, part of the 50S ribosomal subunit; part of the 5S rRNA/L5/L18/L25 subcomplex. Contacts the 5S rRNA and the P site tRNA. Forms a bridge to the 30S subunit in the 70S ribosome.

This is one of the proteins that bind and probably mediate the attachment of the 5S RNA into the large ribosomal subunit, where it forms part of the central protuberance. In the 70S ribosome it contacts protein S13 of the 30S subunit (bridge B1b), connecting the 2 subunits; this bridge is implicated in subunit movement. Contacts the P site tRNA; the 5S rRNA and some of its associated proteins might help stabilize positioning of ribosome-bound tRNAs. This is Large ribosomal subunit protein uL5 from Syntrophus aciditrophicus (strain SB).